Consider the following 185-residue polypeptide: ATP synthase subunit b, chloroplastic (185 aa).

A helical membrane pass occupies residues 27 to 49 (LATNPINLSVVLGVLVFFGKGVL).

Belongs to the ATPase B chain family. As to quaternary structure, F-type ATPases have 2 components, F(1) - the catalytic core - and F(0) - the membrane proton channel. F(1) has five subunits: alpha(3), beta(3), gamma(1), delta(1), epsilon(1). F(0) has four main subunits: a(1), b(1), b'(1) and c(10-14). The alpha and beta chains form an alternating ring which encloses part of the gamma chain. F(1) is attached to F(0) by a central stalk formed by the gamma and epsilon chains, while a peripheral stalk is formed by the delta, b and b' chains.

It is found in the plastid. Its subcellular location is the chloroplast thylakoid membrane. Its function is as follows. F(1)F(0) ATP synthase produces ATP from ADP in the presence of a proton or sodium gradient. F-type ATPases consist of two structural domains, F(1) containing the extramembraneous catalytic core and F(0) containing the membrane proton channel, linked together by a central stalk and a peripheral stalk. During catalysis, ATP synthesis in the catalytic domain of F(1) is coupled via a rotary mechanism of the central stalk subunits to proton translocation. Component of the F(0) channel, it forms part of the peripheral stalk, linking F(1) to F(0). The chain is ATP synthase subunit b, chloroplastic from Glycine max (Soybean).